The primary structure comprises 443 residues: Putative type II methyltransferase M.BsuMIIP (443 aa).

The 437-residue stretch at 4-440 folds into the SAM-dependent MTase C5-type domain; sequence LRVMSLFSGI…QELIHTYVNK (437 aa). The active site involves Cys-78.

Belongs to the class I-like SAM-binding methyltransferase superfamily. C5-methyltransferase family.

The catalysed reaction is a 2'-deoxycytidine in DNA + S-adenosyl-L-methionine = a 5-methyl-2'-deoxycytidine in DNA + S-adenosyl-L-homocysteine + H(+). A putative methylase, recognizes the double-stranded sequence 5'-GGCC-3', methylates C-?. There is no known cognate restriction enzyme. This is Putative type II methyltransferase M.BsuMIIP (mtbP) from Bacillus subtilis (strain 168).